We begin with the raw amino-acid sequence, 244 residues long: Small ribosomal subunit protein uS3 (244 aa).

A KH type-2 domain is found at 39–107 (VREMLRKKLA…PAHINVTEVR (69 aa)). The tract at residues 213–244 (VGQEKQDDSPRNDRNDRGDRGDRPSRPAREAR) is disordered. Positions 216 to 244 (EKQDDSPRNDRNDRGDRGDRPSRPAREAR) are enriched in basic and acidic residues.

This sequence belongs to the universal ribosomal protein uS3 family. Part of the 30S ribosomal subunit. Forms a tight complex with proteins S10 and S14.

Binds the lower part of the 30S subunit head. Binds mRNA in the 70S ribosome, positioning it for translation. The sequence is that of Small ribosomal subunit protein uS3 from Xanthomonas axonopodis pv. citri (strain 306).